A 427-amino-acid polypeptide reads, in one-letter code: Serine--tRNA ligase (427 aa).

Residue 231 to 233 (TAE) coordinates L-serine. 262–264 (RSE) provides a ligand contact to ATP. Glutamate 285 serves as a coordination point for L-serine. Residue 349-352 (EISS) coordinates ATP. An L-serine-binding site is contributed by serine 385.

Belongs to the class-II aminoacyl-tRNA synthetase family. Type-1 seryl-tRNA synthetase subfamily. Homodimer. The tRNA molecule binds across the dimer.

It is found in the cytoplasm. It carries out the reaction tRNA(Ser) + L-serine + ATP = L-seryl-tRNA(Ser) + AMP + diphosphate + H(+). It catalyses the reaction tRNA(Sec) + L-serine + ATP = L-seryl-tRNA(Sec) + AMP + diphosphate + H(+). Its pathway is aminoacyl-tRNA biosynthesis; selenocysteinyl-tRNA(Sec) biosynthesis; L-seryl-tRNA(Sec) from L-serine and tRNA(Sec): step 1/1. Catalyzes the attachment of serine to tRNA(Ser). Is also able to aminoacylate tRNA(Sec) with serine, to form the misacylated tRNA L-seryl-tRNA(Sec), which will be further converted into selenocysteinyl-tRNA(Sec). In Rhizobium leguminosarum bv. trifolii (strain WSM2304), this protein is Serine--tRNA ligase.